The sequence spans 699 residues: Long-chain-fatty-acid--CoA ligase 1 (699 aa).

M1 bears the N-acetylmethionine mark. 3'-nitrotyrosine is present on Y9. Residues 25–45 traverse the membrane as a helical; Signal-anchor for type III membrane protein segment; it reads LPTNTLMGFGAFAALTTFWYA. Over 46–699 the chain is Cytoplasmic; it reads TRPKALKPPC…IDELYATIKI (654 aa). Y85 bears the Phosphotyrosine mark. Position 86 is a 3'-nitrotyrosine (Y86). A glycan (O-linked (GlcNAc) serine) is linked at S136. Residues K208, K357, and K387 each carry the N6-acetyllysine modification. Position 621 is a phosphoserine (S621). K633 is subject to N6-acetyllysine.

This sequence belongs to the ATP-dependent AMP-binding enzyme family. Requires Mg(2+) as cofactor.

It localises to the mitochondrion outer membrane. The protein resides in the peroxisome membrane. It is found in the microsome membrane. Its subcellular location is the endoplasmic reticulum membrane. It catalyses the reaction a long-chain fatty acid + ATP + CoA = a long-chain fatty acyl-CoA + AMP + diphosphate. The catalysed reaction is (5Z,8Z,11Z,14Z)-eicosatetraenoate + ATP + CoA = (5Z,8Z,11Z,14Z)-eicosatetraenoyl-CoA + AMP + diphosphate. The enzyme catalyses 3,7,11,15-tetramethylhexadecanoate + ATP + CoA = phytanoyl-CoA + AMP + diphosphate. It carries out the reaction hexadecanoate + ATP + CoA = hexadecanoyl-CoA + AMP + diphosphate. It catalyses the reaction (E)-hexadec-2-enoate + ATP + CoA = (2E)-hexadecenoyl-CoA + AMP + diphosphate. The catalysed reaction is 2,6,10,14-tetramethylpentadecanoate + ATP + CoA = pristanoyl-CoA + AMP + diphosphate. The enzyme catalyses 14,15-epoxy-(5Z,8Z,11Z)-eicosatrienoate + ATP + CoA = 14,15-epoxy-(5Z,8Z,11Z)-eicosatrienoyl-CoA + AMP + diphosphate. It carries out the reaction 5-hydroxy-(6E,8Z,11Z,14Z)-eicosatetraenoate + ATP + CoA = 5-hydroxy-(6E,8Z,11Z,14Z)-eicosatetraenoyl-CoA + AMP + diphosphate. It catalyses the reaction 12-hydroxy-(5Z,8Z,10E,14Z)-eicosatetraenoate + ATP + CoA = 12-hydroxy-(5Z,8Z,10E,14Z)-eicosatetraenoyl-CoA + AMP + diphosphate. The catalysed reaction is 15-hydroxy-(5Z,8Z,11Z,13E)-eicosatetraenoate + ATP + CoA = 15-hydroxy-(5Z,8Z,11Z,13E)-eicosatetraenoyl-CoA + AMP + diphosphate. The enzyme catalyses (9Z)-octadecenoate + ATP + CoA = (9Z)-octadecenoyl-CoA + AMP + diphosphate. With respect to regulation, inhibited at high temperature and by arachidonate. Catalyzes the conversion of long-chain fatty acids to their active form acyl-CoAs for both synthesis of cellular lipids, and degradation via beta-oxidation. Preferentially uses palmitoleate, oleate and linoleate. Preferentially activates arachidonate than epoxyeicosatrienoic acids (EETs) or hydroxyeicosatrienoic acids (HETEs). This Mus musculus (Mouse) protein is Long-chain-fatty-acid--CoA ligase 1.